The primary structure comprises 122 residues: MIQQESRLRVADNTGAKEILTIRVLGGSGRRYAGIGDVIVATVKDAIPGGNVKKGDVVKAVIVRTVKERRRQDGSYIRFDENAAVILKNDGDPRGTRIFGPVGRELREKKFMKIISLAPEVL.

It belongs to the universal ribosomal protein uL14 family. Part of the 50S ribosomal subunit. Forms a cluster with proteins L3 and L19. In the 70S ribosome, L14 and L19 interact and together make contacts with the 16S rRNA in bridges B5 and B8.

Its function is as follows. Binds to 23S rRNA. Forms part of two intersubunit bridges in the 70S ribosome. The polypeptide is Large ribosomal subunit protein uL14 (Streptomyces griseus subsp. griseus (strain JCM 4626 / CBS 651.72 / NBRC 13350 / KCC S-0626 / ISP 5235)).